Here is a 122-residue protein sequence, read N- to C-terminus: Large ribosomal subunit protein eL8 (122 aa).

This sequence belongs to the eukaryotic ribosomal protein eL8 family. Part of the 50S ribosomal subunit. Probably part of the RNase P complex.

The protein resides in the cytoplasm. Multifunctional RNA-binding protein that recognizes the K-turn motif in ribosomal RNA, the RNA component of RNase P, box H/ACA, box C/D and box C'/D' sRNAs. This Methanothrix thermoacetophila (strain DSM 6194 / JCM 14653 / NBRC 101360 / PT) (Methanosaeta thermophila) protein is Large ribosomal subunit protein eL8.